The following is a 1029-amino-acid chain: FYVE, RhoGEF and PH domain-containing protein tag-77 (1029 aa).

Composition is skewed to basic and acidic residues over residues 1-12 (MKYDMNHRKNSD) and 20-39 (TVKE…DNRF). 3 disordered regions span residues 1–155 (MKYD…ATSE), 185–254 (VPRM…ERKT), and 279–370 (NNGV…EKDD). A compositionally biased stretch (pro residues) spans 42–56 (QPPPPPSPRRAPPPP). 2 stretches are compositionally biased toward low complexity: residues 76–85 (PPSSSESSEN) and 122–133 (SSSTSDVSSQNS). 2 stretches are compositionally biased toward polar residues: residues 141-155 (SCTT…ATSE) and 200-211 (PISQVSTLSQVS). The span at 212 to 227 (DEFDEGDTSASDEESM) shows a compositional bias: acidic residues. The span at 316–334 (SPTSGMSSSSTDDFSRITS) shows a compositional bias: low complexity. Residues 335-347 (MTSDRSSILTSHS) show a composition bias toward polar residues. Residues 375–572 (KLHYAAVEFL…ENVTQAVNQK (198 aa)) enclose the DH domain. One can recognise a PH domain in the interval 593-696 (NVLEPGRVLI…WTDDLTKAQY (104 aa)). Positions 810, 823, 826, 831, 834, 851, and 854 each coordinate Zn(2+). The FYVE-type; degenerate zinc finger occupies 810 to 859 (CSTEFNIINRRHHCRDCGWLICKFCKGQAPLSKYDFTKQNVCSECFDRHY).

The protein resides in the cytoplasm. The protein localises to the cytoskeleton. Activates cdc-42, a member of the Ras-like family of Rho- and Rac proteins, by exchanging bound GDP for free GTP. May play a role in regulating the actin cytoskeleton and cell shape. Required for normal lifespan. The sequence is that of FYVE, RhoGEF and PH domain-containing protein tag-77 from Caenorhabditis elegans.